The following is a 235-amino-acid chain: Phosphoribosylaminoimidazole-succinocarboxamide synthase (235 aa).

It belongs to the SAICAR synthetase family.

It carries out the reaction 5-amino-1-(5-phospho-D-ribosyl)imidazole-4-carboxylate + L-aspartate + ATP = (2S)-2-[5-amino-1-(5-phospho-beta-D-ribosyl)imidazole-4-carboxamido]succinate + ADP + phosphate + 2 H(+). It participates in purine metabolism; IMP biosynthesis via de novo pathway; 5-amino-1-(5-phospho-D-ribosyl)imidazole-4-carboxamide from 5-amino-1-(5-phospho-D-ribosyl)imidazole-4-carboxylate: step 1/2. This chain is Phosphoribosylaminoimidazole-succinocarboxamide synthase, found in Clostridium beijerinckii (strain ATCC 51743 / NCIMB 8052) (Clostridium acetobutylicum).